The chain runs to 333 residues: Ketol-acid reductoisomerase (NADP(+)) (333 aa).

The KARI N-terminal Rossmann domain maps to Met-1 to Thr-171. Residues Tyr-14 to Gln-17, Arg-37, Thr-42, and Asp-72 to Gln-75 each bind NADP(+). Residue His-97 is part of the active site. Gly-123 is a binding site for NADP(+). Positions Thr-172–Leu-317 constitute a KARI C-terminal knotted domain. Mg(2+) contacts are provided by Asp-180, Glu-184, Glu-216, and Glu-220. Residue Ser-241 participates in substrate binding.

The protein belongs to the ketol-acid reductoisomerase family. Mg(2+) is required as a cofactor.

It carries out the reaction (2R)-2,3-dihydroxy-3-methylbutanoate + NADP(+) = (2S)-2-acetolactate + NADPH + H(+). It catalyses the reaction (2R,3R)-2,3-dihydroxy-3-methylpentanoate + NADP(+) = (S)-2-ethyl-2-hydroxy-3-oxobutanoate + NADPH + H(+). Its pathway is amino-acid biosynthesis; L-isoleucine biosynthesis; L-isoleucine from 2-oxobutanoate: step 2/4. The protein operates within amino-acid biosynthesis; L-valine biosynthesis; L-valine from pyruvate: step 2/4. Involved in the biosynthesis of branched-chain amino acids (BCAA). Catalyzes an alkyl-migration followed by a ketol-acid reduction of (S)-2-acetolactate (S2AL) to yield (R)-2,3-dihydroxy-isovalerate. In the isomerase reaction, S2AL is rearranged via a Mg-dependent methyl migration to produce 3-hydroxy-3-methyl-2-ketobutyrate (HMKB). In the reductase reaction, this 2-ketoacid undergoes a metal-dependent reduction by NADPH to yield (R)-2,3-dihydroxy-isovalerate. The protein is Ketol-acid reductoisomerase (NADP(+)) of Xanthomonas campestris pv. campestris (strain 8004).